Here is a 280-residue protein sequence, read N- to C-terminus: Protein YibA (280 aa).

The sequence is that of Protein YibA (yibA) from Escherichia coli O157:H7.